We begin with the raw amino-acid sequence, 462 residues long: CUGBP Elav-like family member 3-B (462 aa).

3 RRM domains span residues I7–S88, R95–T175, and C377–P455.

The protein belongs to the CELF/BRUNOL family.

The protein resides in the nucleus. It is found in the cytoplasm. RNA-binding protein that may be involved in the regulation of pre-mRNA alternative splicing. In Xenopus laevis (African clawed frog), this protein is CUGBP Elav-like family member 3-B (tnrc4-b).